A 168-amino-acid chain; its full sequence is Photosystem I assembly protein Ycf3 (168 aa).

TPR repeat units follow at residues 35–68 (AFTYYRDGMSAQSEGNYAEALQNYYEATRLEIDP), 72–105 (SYILYNIGLIHTSNGEHTKALEYYFRALERNPFL), and 120–153 (GEQAIQQGDSEIAESWFDQAAEYWKQAIALTPGN).

The protein belongs to the Ycf3 family.

It localises to the plastid. The protein localises to the chloroplast thylakoid membrane. Its function is as follows. Essential for the assembly of the photosystem I (PSI) complex. May act as a chaperone-like factor to guide the assembly of the PSI subunits. The sequence is that of Photosystem I assembly protein Ycf3 from Nandina domestica (Heavenly bamboo).